An 872-amino-acid polypeptide reads, in one-letter code: Alanine--tRNA ligase (872 aa).

4 residues coordinate Zn(2+): histidine 567, histidine 571, cysteine 669, and histidine 673.

It belongs to the class-II aminoacyl-tRNA synthetase family. The cofactor is Zn(2+).

The protein localises to the cytoplasm. The catalysed reaction is tRNA(Ala) + L-alanine + ATP = L-alanyl-tRNA(Ala) + AMP + diphosphate. Its function is as follows. Catalyzes the attachment of alanine to tRNA(Ala) in a two-step reaction: alanine is first activated by ATP to form Ala-AMP and then transferred to the acceptor end of tRNA(Ala). Also edits incorrectly charged Ser-tRNA(Ala) and Gly-tRNA(Ala) via its editing domain. The sequence is that of Alanine--tRNA ligase from Streptococcus pyogenes serotype M12 (strain MGAS2096).